The chain runs to 324 residues: Probable pectinesterase A (324 aa).

An N-terminal signal peptide occupies residues 1-19; sequence MHGSLLKLALLSFSLGSSA. Glutamine 142 contacts substrate. Residue aspartate 165 is the Proton donor of the active site. The Nucleophile role is filled by aspartate 186. Residues arginine 246 and tryptophan 248 each coordinate substrate. A glycan (N-linked (GlcNAc...) asparagine) is linked at asparagine 285.

This sequence belongs to the pectinesterase family.

It localises to the secreted. It catalyses the reaction [(1-&gt;4)-alpha-D-galacturonosyl methyl ester](n) + n H2O = [(1-&gt;4)-alpha-D-galacturonosyl](n) + n methanol + n H(+). Its pathway is glycan metabolism; pectin degradation; 2-dehydro-3-deoxy-D-gluconate from pectin: step 1/5. Functionally, involved in maceration and soft-rotting of plant tissue. This is Probable pectinesterase A (pmeA) from Aspergillus oryzae (strain ATCC 42149 / RIB 40) (Yellow koji mold).